Consider the following 184-residue polypeptide: MAEPQPASSGLTDETAFSCCSDPDPSTKDFLLQQTMLRIKDPKKSLDFYTRVLGLTLLQKLDFPAMKFSLYFLAYEDKNDIPKDKSEKTAWTFSRKATLELTHNWGTEDDETQSYHNGNSDPRGFGHIGIAVPDVYSACKRFEELGVKFVKKPDDGKMKGLAFIQDPDGYWIEILNPNKIATII.

The residue at position 2 (alanine 2) is an N-acetylalanine. A disulfide bridge connects residues cysteine 19 and cysteine 20. One can recognise a VOC domain in the interval 31–177 (LLQQTMLRIK…DGYWIEILNP (147 aa)). The substrate site is built by glutamine 34 and arginine 38. Position 34 (glutamine 34) interacts with Zn(2+). An N6-succinyllysine modification is found at lysine 88. Glutamate 100 lines the Zn(2+) pocket. Position 104 (asparagine 104) interacts with substrate. Residue threonine 107 is modified to Phosphothreonine. Substrate is bound by residues arginine 123 and histidine 127. Residue histidine 127 participates in Zn(2+) binding. An S-glutathionyl cysteine modification is found at cysteine 139. An N6-acetyllysine; alternate modification is found at lysine 148. Lysine 148 bears the N6-succinyllysine; alternate mark. 157-158 (KM) is a substrate binding site. Residue glutamate 173 participates in Zn(2+) binding. Glutamate 173 serves as the catalytic Proton donor/acceptor.

This sequence belongs to the glyoxalase I family. Homodimer. Requires Zn(2+) as cofactor. Glutathionylation at Cys-139 inhibits enzyme activity. In terms of processing, phosphorylated at Thr-107 in the presence of CaMK2. However, this is a consensus site for phosphorylation by CK2 so phosphorylation may be mediated by CK2 rather than CaMK2. Phosphorylation is induced by TNF and suppresses the TNF-induced transcriptional activity of NF-kappa-B. Post-translationally, exists in a nitric oxide (NO)-modified form. The exact nature of the modification is unknown, but it suppresses the TNF-induced transcriptional activity of NF-kappa-B.

The catalysed reaction is (R)-S-lactoylglutathione = methylglyoxal + glutathione. It participates in secondary metabolite metabolism; methylglyoxal degradation; (R)-lactate from methylglyoxal: step 1/2. Its activity is regulated as follows. Subject to competitive inhibition by methyl-gerfelin. In terms of biological role, catalyzes the conversion of hemimercaptal, formed from methylglyoxal and glutathione, to S-lactoylglutathione. Involved in the regulation of TNF-induced transcriptional activity of NF-kappa-B. Required for normal osteoclastogenesis. This Mus musculus (Mouse) protein is Lactoylglutathione lyase (Glo1).